The chain runs to 369 residues: tRNA-specific 2-thiouridylase MnmA (369 aa).

Residues 10 to 17 (GLSGGVDS) and L36 each bind ATP. C97 acts as the Nucleophile in catalysis. C97 and C196 form a disulfide bridge. G122 is an ATP binding site. The segment at 146 to 148 (KDQ) is interaction with tRNA. C196 (cysteine persulfide intermediate) is an active-site residue. Residues 301–302 (RY) form an interaction with tRNA region.

This sequence belongs to the MnmA/TRMU family.

Its subcellular location is the cytoplasm. It carries out the reaction S-sulfanyl-L-cysteinyl-[protein] + uridine(34) in tRNA + AH2 + ATP = 2-thiouridine(34) in tRNA + L-cysteinyl-[protein] + A + AMP + diphosphate + H(+). Its function is as follows. Catalyzes the 2-thiolation of uridine at the wobble position (U34) of tRNA, leading to the formation of s(2)U34. The sequence is that of tRNA-specific 2-thiouridylase MnmA from Thermosynechococcus vestitus (strain NIES-2133 / IAM M-273 / BP-1).